The following is a 75-amino-acid chain: Translational regulator CsrA (75 aa).

This sequence belongs to the CsrA/RsmA family. In terms of assembly, homodimer; the beta-strands of each monomer intercalate to form a hydrophobic core, while the alpha-helices form wings that extend away from the core.

It is found in the cytoplasm. In terms of biological role, a translational regulator that binds mRNA to regulate translation initiation and/or mRNA stability. Usually binds in the 5'-UTR at or near the Shine-Dalgarno sequence preventing ribosome-binding, thus repressing translation. Its main target seems to be the major flagellin gene, while its function is anatagonized by FliW. In Treponema denticola (strain ATCC 35405 / DSM 14222 / CIP 103919 / JCM 8153 / KCTC 15104), this protein is Translational regulator CsrA.